A 1446-amino-acid polypeptide reads, in one-letter code: DNA polymerase III PolC-type (1446 aa).

Residues 425–581 (YVIFDVETTG…ADAESTGYLL (157 aa)) enclose the Exonuclease domain.

Belongs to the DNA polymerase type-C family. PolC subfamily.

Its subcellular location is the cytoplasm. It catalyses the reaction DNA(n) + a 2'-deoxyribonucleoside 5'-triphosphate = DNA(n+1) + diphosphate. Required for replicative DNA synthesis. This DNA polymerase also exhibits 3' to 5' exonuclease activity. The sequence is that of DNA polymerase III PolC-type from Latilactobacillus sakei subsp. sakei (strain 23K) (Lactobacillus sakei subsp. sakei).